The following is a 352-amino-acid chain: Protein-glutamate methylesterase/protein-glutamine glutaminase 2 (352 aa).

Residues 1-116 enclose the Response regulatory domain; that stretch reads MVVDDSAVVR…KQFLTDSADE (116 aa). 4-aspartylphosphate is present on D50. The CheB-type methylesterase domain maps to 162–352; it reads AQTTERIVAI…MAREIVTQLQ (191 aa). Active-site residues include S174, H200, and D296.

This sequence belongs to the CheB family. In terms of processing, phosphorylated by CheA. Phosphorylation of the N-terminal regulatory domain activates the methylesterase activity.

The protein localises to the cytoplasm. It catalyses the reaction [protein]-L-glutamate 5-O-methyl ester + H2O = L-glutamyl-[protein] + methanol + H(+). The enzyme catalyses L-glutaminyl-[protein] + H2O = L-glutamyl-[protein] + NH4(+). Involved in chemotaxis. Part of a chemotaxis signal transduction system that modulates chemotaxis in response to various stimuli. Catalyzes the demethylation of specific methylglutamate residues introduced into the chemoreceptors (methyl-accepting chemotaxis proteins or MCP) by CheR. Also mediates the irreversible deamidation of specific glutamine residues to glutamic acid. This chain is Protein-glutamate methylesterase/protein-glutamine glutaminase 2, found in Xanthomonas axonopodis pv. citri (strain 306).